The sequence spans 326 residues: NDRG-like protein (326 aa).

The protein belongs to the NDRG family.

The protein is NDRG-like protein of Dictyostelium discoideum (Social amoeba).